The primary structure comprises 86 residues: Mu-theraphotoxin-Cg2a 1 (86 aa).

The first 21 residues, 1 to 21, serve as a signal peptide directing secretion; sequence MKVSVVITLAVLGIMFVWASA. Residues 22–50 constitute a propeptide that is removed on maturation; the sequence is AELEERGSDQRDSPAWLKSMERIFQSEER. Intrachain disulfides connect Cys52–Cys66, Cys59–Cys71, and Cys65–Cys78. The residue at position 84 (Phe84) is a Phenylalanine amide.

It belongs to the neurotoxin 10 (Hwtx-1) family. 37 (Jztx-31) subfamily. As to expression, expressed by the venom gland.

It localises to the secreted. Its function is as follows. Inhibits both peak current and fast inactivation of voltage-gated sodium channels (Nav) channels. Inhibits the inactivation of Nav on DRG neurons (EC(50)=1.77 uM) and peak current of cardiac myocytes (IC(50)=0.90 uM). This chain is Mu-theraphotoxin-Cg2a 1, found in Chilobrachys guangxiensis (Chinese earth tiger tarantula).